The following is a 349-amino-acid chain: Fe(3+) ions import ATP-binding protein FbpC (349 aa).

Residues 4–236 (LELHHIGKSY…PVDEPTATFL (233 aa)) form the ABC transporter domain. 36–43 (GPSGSGKT) contributes to the ATP binding site.

The protein belongs to the ABC transporter superfamily. Fe(3+) ion importer (TC 3.A.1.10) family. In terms of assembly, the complex is composed of two ATP-binding proteins (FbpC), two transmembrane proteins (FbpB) and a solute-binding protein (FbpA).

The protein resides in the cell inner membrane. The catalysed reaction is Fe(3+)(out) + ATP + H2O = Fe(3+)(in) + ADP + phosphate + H(+). Part of the ABC transporter complex FbpABC involved in Fe(3+) ions import. Responsible for energy coupling to the transport system. This is Fe(3+) ions import ATP-binding protein FbpC from Yersinia pseudotuberculosis serotype I (strain IP32953).